The primary structure comprises 190 residues: Anthranilate synthase component II (190 aa).

Residues 1-190 (MILIIDNYDS…ENFCTGIAKA (190 aa)) enclose the Glutamine amidotransferase type-1 domain. 51 to 53 (GPG) is a binding site for L-glutamine. Cys-76 (nucleophile; for GATase activity) is an active-site residue. L-glutamine contacts are provided by residues Gln-80 and 126–127 (SL). Catalysis depends on residues His-167 and Glu-169.

Tetramer of two components I and two components II.

It carries out the reaction chorismate + L-glutamine = anthranilate + pyruvate + L-glutamate + H(+). The protein operates within amino-acid biosynthesis; L-tryptophan biosynthesis; L-tryptophan from chorismate: step 1/5. This Haloarcula marismortui (strain ATCC 43049 / DSM 3752 / JCM 8966 / VKM B-1809) (Halobacterium marismortui) protein is Anthranilate synthase component II (trpG2).